We begin with the raw amino-acid sequence, 449 residues long: UDP-N-acetylmuramoylalanine--D-glutamate ligase (449 aa).

Residue Gly-118–Thr-124 participates in ATP binding.

Belongs to the MurCDEF family.

The protein resides in the cytoplasm. The catalysed reaction is UDP-N-acetyl-alpha-D-muramoyl-L-alanine + D-glutamate + ATP = UDP-N-acetyl-alpha-D-muramoyl-L-alanyl-D-glutamate + ADP + phosphate + H(+). The protein operates within cell wall biogenesis; peptidoglycan biosynthesis. Cell wall formation. Catalyzes the addition of glutamate to the nucleotide precursor UDP-N-acetylmuramoyl-L-alanine (UMA). The protein is UDP-N-acetylmuramoylalanine--D-glutamate ligase of Staphylococcus saprophyticus subsp. saprophyticus (strain ATCC 15305 / DSM 20229 / NCIMB 8711 / NCTC 7292 / S-41).